Reading from the N-terminus, the 184-residue chain is Pupal cuticle protein (184 aa).

The N-terminal stretch at 1–15 (MYLLVNFIVALAVLQ) is a signal peptide. Residues 42–103 (DGKYRYAYET…PVGAHIPQVP (62 aa)) form the Chitin-binding type R&amp;R domain. The segment covering 147 to 160 (DHTIPQSRPSTTPK) has biased composition (polar residues). Residues 147-184 (DHTIPQSRPSTTPKTIYLTHPPTTTSRPLRQRRALPTH) form a disordered region. Basic residues predominate over residues 175–184 (LRQRRALPTH).

In terms of biological role, component of the cuticle of the pupa of fruit fly. In Drosophila melanogaster (Fruit fly), this protein is Pupal cuticle protein (Pcp).